A 404-amino-acid chain; its full sequence is Glutamyl-tRNA reductase (404 aa).

Substrate contacts are provided by residues 47-50, Ser-94, 99-101, and Gln-105; these read TCNR and EQE. Cys-48 functions as the Nucleophile in the catalytic mechanism. 174–179 provides a ligand contact to NADP(+); sequence GAGEMG.

Homotetramer.

The catalysed reaction is (S)-4-amino-5-oxopentanoate + tRNA(Glu) + NADP(+) = L-glutamyl-tRNA(Glu) + NADPH + H(+). The protein operates within porphyrin-containing compound metabolism; protoporphyrin-IX biosynthesis; 5-aminolevulinate from L-glutamyl-tRNA(Glu): step 1/2. Its activity is regulated as follows. Inhibited by heavy metal compounds, Zn(2+), and heme. Also competitively inhibited by glutamycin. Functionally, catalyzes the NADPH-dependent reduction of glutamyl-tRNA(Glu) to glutamate 1-semialdehyde (GSA). In the absence of NADPH, exhibits substrate esterase activity, leading to the release of glutamate from tRNA. This Methanopyrus kandleri (strain AV19 / DSM 6324 / JCM 9639 / NBRC 100938) protein is Glutamyl-tRNA reductase (hemA).